The primary structure comprises 635 residues: PTS system mannitol-specific EIICBA component (635 aa).

Residues 12-342 form the PTS EIIC type-2 domain; it reads FGRFLSNMVM…LFKTSKVKER (331 aa). Transmembrane regions (helical) follow at residues 24–45, 50–70, 134–155, 165–185, 273–292, and 313–334; these read IGAF…WLPN, KLVG…TGGK, SAGI…PAVE, VNFM…EPAK, VILG…GGLV, and FANI…AVLF. Residues 378 to 473 enclose the PTS EIIB type-2 domain; the sequence is RKIIVACDAG…RLVAAQRHID (96 aa). Catalysis depends on Cys384, which acts as the Phosphocysteine intermediate; for EIIB activity. Cys384 carries the post-translational modification Phosphocysteine; by EIIA. One can recognise a PTS EIIA type-2 domain in the interval 494 to 635; that stretch reads FQLGADNIFL…VDEVLALLNK (142 aa). His554 functions as the Tele-phosphohistidine intermediate; for EIIA activity in the catalytic mechanism. A Phosphohistidine; by HPr modification is found at His554.

As to quaternary structure, homodimer. Post-translationally, an intramolecular phosphotransfer takes places between His-554 and Cys-384.

It localises to the cell inner membrane. The enzyme catalyses D-mannitol(out) + N(pros)-phospho-L-histidyl-[protein] = D-mannitol 1-phosphate(in) + L-histidyl-[protein]. Functionally, the phosphoenolpyruvate-dependent sugar phosphotransferase system (sugar PTS), a major carbohydrate active transport system, catalyzes the phosphorylation of incoming sugar substrates concomitantly with their translocation across the cell membrane. This system is involved in D-mannitol transport. This is PTS system mannitol-specific EIICBA component from Klebsiella pneumoniae.